The chain runs to 244 residues: MPLILLPAVDVVEGRAVRLVQGKAGSQTEYGSAVDAALGWQRDGAEWIHLVDLDAAFGRGSNHELLAEVVGKLDVQVELSGGIRDDESLAAALATGCARVNVGTAALENPQWCARVIGEHGDQVAVGLDVQIIDGEHRLRGRGWETDGGDLWDVLERLDSEGCSRFVVTDITKDGTLGGPNLDLLAGVADRTDAPVIASGGVSSLDDLRAIATLTHRGVEGAIVGKALYARRFTLPQALAAVRD.

D10 functions as the Proton acceptor in the catalytic mechanism. The active-site Proton donor is the D129.

Belongs to the HisA/HisF family.

It localises to the cytoplasm. The enzyme catalyses 1-(5-phospho-beta-D-ribosyl)-5-[(5-phospho-beta-D-ribosylamino)methylideneamino]imidazole-4-carboxamide = 5-[(5-phospho-1-deoxy-D-ribulos-1-ylimino)methylamino]-1-(5-phospho-beta-D-ribosyl)imidazole-4-carboxamide. It catalyses the reaction N-(5-phospho-beta-D-ribosyl)anthranilate = 1-(2-carboxyphenylamino)-1-deoxy-D-ribulose 5-phosphate. It participates in amino-acid biosynthesis; L-histidine biosynthesis; L-histidine from 5-phospho-alpha-D-ribose 1-diphosphate: step 4/9. Its pathway is amino-acid biosynthesis; L-tryptophan biosynthesis; L-tryptophan from chorismate: step 3/5. In terms of biological role, involved in both the histidine and tryptophan biosynthetic pathways. The chain is Phosphoribosyl isomerase A (priA) from Mycobacterium tuberculosis (strain CDC 1551 / Oshkosh).